A 171-amino-acid polypeptide reads, in one-letter code: S-ribosylhomocysteine lyase (171 aa).

Positions 54, 58, and 128 each coordinate Fe cation.

It belongs to the LuxS family. In terms of assembly, homodimer. Fe cation serves as cofactor.

It catalyses the reaction S-(5-deoxy-D-ribos-5-yl)-L-homocysteine = (S)-4,5-dihydroxypentane-2,3-dione + L-homocysteine. Functionally, involved in the synthesis of autoinducer 2 (AI-2) which is secreted by bacteria and is used to communicate both the cell density and the metabolic potential of the environment. The regulation of gene expression in response to changes in cell density is called quorum sensing. Catalyzes the transformation of S-ribosylhomocysteine (RHC) to homocysteine (HC) and 4,5-dihydroxy-2,3-pentadione (DPD). The polypeptide is S-ribosylhomocysteine lyase (Serratia proteamaculans (strain 568)).